The sequence spans 462 residues: CCA-adding enzyme (462 aa).

Residues Ser54 and Arg57 each coordinate ATP. CTP contacts are provided by Ser54 and Arg57. Positions 66, 68, and 117 each coordinate Mg(2+). Residues His140, Lys160, and Tyr169 each coordinate ATP. The CTP site is built by His140, Lys160, and Tyr169.

This sequence belongs to the tRNA nucleotidyltransferase/poly(A) polymerase family. Archaeal CCA-adding enzyme subfamily. Homodimer. Mg(2+) serves as cofactor.

It carries out the reaction a tRNA precursor + 2 CTP + ATP = a tRNA with a 3' CCA end + 3 diphosphate. It catalyses the reaction a tRNA with a 3' CCA end + 2 CTP + ATP = a tRNA with a 3' CCACCA end + 3 diphosphate. In terms of biological role, catalyzes the addition and repair of the essential 3'-terminal CCA sequence in tRNAs without using a nucleic acid template. Adds these three nucleotides in the order of C, C, and A to the tRNA nucleotide-73, using CTP and ATP as substrates and producing inorganic pyrophosphate. tRNA 3'-terminal CCA addition is required both for tRNA processing and repair. Also involved in tRNA surveillance by mediating tandem CCA addition to generate a CCACCA at the 3' terminus of unstable tRNAs. While stable tRNAs receive only 3'-terminal CCA, unstable tRNAs are marked with CCACCA and rapidly degraded. The sequence is that of CCA-adding enzyme from Halorubrum lacusprofundi (strain ATCC 49239 / DSM 5036 / JCM 8891 / ACAM 34).